The following is a 245-amino-acid chain: 1-(5-phosphoribosyl)-5-[(5-phosphoribosylamino)methylideneamino] imidazole-4-carboxamide isomerase (245 aa).

Asp11 serves as the catalytic Proton acceptor. Residue Asp132 is the Proton donor of the active site.

The protein belongs to the HisA/HisF family.

Its subcellular location is the cytoplasm. The enzyme catalyses 1-(5-phospho-beta-D-ribosyl)-5-[(5-phospho-beta-D-ribosylamino)methylideneamino]imidazole-4-carboxamide = 5-[(5-phospho-1-deoxy-D-ribulos-1-ylimino)methylamino]-1-(5-phospho-beta-D-ribosyl)imidazole-4-carboxamide. It functions in the pathway amino-acid biosynthesis; L-histidine biosynthesis; L-histidine from 5-phospho-alpha-D-ribose 1-diphosphate: step 4/9. The polypeptide is 1-(5-phosphoribosyl)-5-[(5-phosphoribosylamino)methylideneamino] imidazole-4-carboxamide isomerase (Bacillus velezensis (strain DSM 23117 / BGSC 10A6 / LMG 26770 / FZB42) (Bacillus amyloliquefaciens subsp. plantarum)).